Reading from the N-terminus, the 312-residue chain is Glycerol-3-phosphate dehydrogenase [NAD(P)+] (312 aa).

NADPH-binding residues include tryptophan 11, arginine 30, arginine 31, and lysine 95. Lysine 95, glycine 123, and serine 125 together coordinate sn-glycerol 3-phosphate. An NADPH-binding site is contributed by alanine 127. The sn-glycerol 3-phosphate site is built by lysine 177, aspartate 230, serine 240, arginine 241, and asparagine 242. The active-site Proton acceptor is the lysine 177. Arginine 241 is a binding site for NADPH. Valine 265 and glutamate 267 together coordinate NADPH.

Belongs to the NAD-dependent glycerol-3-phosphate dehydrogenase family.

Its subcellular location is the cytoplasm. It carries out the reaction sn-glycerol 3-phosphate + NAD(+) = dihydroxyacetone phosphate + NADH + H(+). The catalysed reaction is sn-glycerol 3-phosphate + NADP(+) = dihydroxyacetone phosphate + NADPH + H(+). It participates in membrane lipid metabolism; glycerophospholipid metabolism. Functionally, catalyzes the reduction of the glycolytic intermediate dihydroxyacetone phosphate (DHAP) to sn-glycerol 3-phosphate (G3P), the key precursor for phospholipid synthesis. This Helicobacter pylori (strain P12) protein is Glycerol-3-phosphate dehydrogenase [NAD(P)+].